We begin with the raw amino-acid sequence, 434 residues long: Sulfide-quinone reductase (434 aa).

FAD contacts are provided by residues 8–12 (GAGTG), 34–35 (SA), and 77–78 (SA). Cysteine 160 serves as the catalytic Cysteine persulfide intermediate. Positions 302 and 322 each coordinate FAD. Cysteine 356 serves as the catalytic Cysteine persulfide intermediate. Lysine 391 serves as a coordination point for FAD.

It belongs to the SQRD family. In terms of assembly, homodimer. The cofactor is FAD.

It is found in the membrane. The catalysed reaction is n a quinone + n hydrogen sulfide + n H(+) = polysulfur(n-2) + n a quinol. Functionally, catalyzes the oxidation of hydrogen sulfide, with the help of a quinone. Consecutive reaction cycles lead to the accumulation of a polysulfide product on the active site Cys residues; these products are released when they exceed a critical length, typically as cyclooctasulfur. The protein is Sulfide-quinone reductase of Acidithiobacillus ferrooxidans (strain ATCC 23270 / DSM 14882 / CIP 104768 / NCIMB 8455) (Ferrobacillus ferrooxidans (strain ATCC 23270)).